Reading from the N-terminus, the 284-residue chain is Large ribosomal subunit protein uL2 (284 aa).

Disordered stretches follow at residues 28–50 and 232–284; these read ELKG…FKKS and RGTA…DRRK. A compositionally biased stretch (basic residues) spans 36–46; sequence RSVRPNKKLSF. A compositionally biased stretch (basic and acidic residues) spans 240 to 250; the sequence is DHPHGGGEGRH. Basic residues predominate over residues 264–284; the sequence is KGLKTRDKRKSNKWIVKDRRK.

The protein belongs to the universal ribosomal protein uL2 family. As to quaternary structure, part of the 50S ribosomal subunit. Forms a bridge to the 30S subunit in the 70S ribosome.

Functionally, one of the primary rRNA binding proteins. Required for association of the 30S and 50S subunits to form the 70S ribosome, for tRNA binding and peptide bond formation. It has been suggested to have peptidyltransferase activity; this is somewhat controversial. Makes several contacts with the 16S rRNA in the 70S ribosome. The protein is Large ribosomal subunit protein uL2 of Chlamydia trachomatis serovar L2 (strain ATCC VR-902B / DSM 19102 / 434/Bu).